A 170-amino-acid polypeptide reads, in one-letter code: J domain-containing protein (170 aa).

A J domain is found at 17–82; it reads DYYALLGCDE…SKRALYDKWR (66 aa). The tract at residues 101–170 is disordered; it reads QQSMHWSKPN…VISKFRNYEI (70 aa). Basic and acidic residues predominate over residues 110-120; the sequence is NTKDRMLEGEP. 2 stretches are compositionally biased toward low complexity: residues 121 to 135 and 142 to 153; these read GKPSGPSSLGPSNPG and GGAALWGRWGAG.

The protein is J domain-containing protein (jdp) of Manduca sexta (Tobacco hawkmoth).